A 160-amino-acid polypeptide reads, in one-letter code: 6,7-dimethyl-8-ribityllumazine synthase (160 aa).

5-amino-6-(D-ribitylamino)uracil is bound by residues Phe22, 57 to 59 (TYE), and 81 to 83 (TII). Residue 86–87 (QT) participates in (2S)-2-hydroxy-3-oxobutyl phosphate binding. The active-site Proton donor is the His89. Leu114 contributes to the 5-amino-6-(D-ribitylamino)uracil binding site. Arg128 provides a ligand contact to (2S)-2-hydroxy-3-oxobutyl phosphate.

This sequence belongs to the DMRL synthase family. Forms an icosahedral capsid composed of 60 subunits, arranged as a dodecamer of pentamers.

The enzyme catalyses (2S)-2-hydroxy-3-oxobutyl phosphate + 5-amino-6-(D-ribitylamino)uracil = 6,7-dimethyl-8-(1-D-ribityl)lumazine + phosphate + 2 H2O + H(+). It functions in the pathway cofactor biosynthesis; riboflavin biosynthesis; riboflavin from 2-hydroxy-3-oxobutyl phosphate and 5-amino-6-(D-ribitylamino)uracil: step 1/2. Catalyzes the formation of 6,7-dimethyl-8-ribityllumazine by condensation of 5-amino-6-(D-ribitylamino)uracil with 3,4-dihydroxy-2-butanone 4-phosphate. This is the penultimate step in the biosynthesis of riboflavin. The polypeptide is 6,7-dimethyl-8-ribityllumazine synthase (Buchnera aphidicola subsp. Acyrthosiphon pisum (strain APS) (Acyrthosiphon pisum symbiotic bacterium)).